A 221-amino-acid chain; its full sequence is Lipoprotein-releasing system ATP-binding protein LolD (221 aa).

An ABC transporter domain is found at 6-220 (LILKNISKHY…YKLKHRLLNI (215 aa)). 42–49 (GSSGSGKS) serves as a coordination point for ATP.

This sequence belongs to the ABC transporter superfamily. Lipoprotein translocase (TC 3.A.1.125) family. In terms of assembly, the complex is composed of two ATP-binding proteins (LolD) and two transmembrane proteins (LolC and LolE).

It localises to the cell inner membrane. In terms of biological role, part of the ABC transporter complex LolCDE involved in the translocation of mature outer membrane-directed lipoproteins, from the inner membrane to the periplasmic chaperone, LolA. Responsible for the formation of the LolA-lipoprotein complex in an ATP-dependent manner. In Rickettsia conorii (strain ATCC VR-613 / Malish 7), this protein is Lipoprotein-releasing system ATP-binding protein LolD.